Reading from the N-terminus, the 377-residue chain is Chaperone protein DnaJ (377 aa).

The 66-residue stretch at 5 to 70 (DYYEILGVSK…QKRAAYDQYG (66 aa)) folds into the J domain. The segment at 132-210 (GVTKEIRIPT…CHGHGRVEKT (79 aa)) adopts a CR-type zinc-finger fold. The Zn(2+) site is built by cysteine 145, cysteine 148, cysteine 162, cysteine 165, cysteine 184, cysteine 187, cysteine 198, and cysteine 201. CXXCXGXG motif repeat units follow at residues 145–152 (CDVCHGSG), 162–169 (CPTCHGAG), 184–191 (CPHCQGRG), and 198–205 (CNKCHGHG).

Belongs to the DnaJ family. Homodimer. Zn(2+) is required as a cofactor.

Its subcellular location is the cytoplasm. Its function is as follows. Participates actively in the response to hyperosmotic and heat shock by preventing the aggregation of stress-denatured proteins and by disaggregating proteins, also in an autonomous, DnaK-independent fashion. Unfolded proteins bind initially to DnaJ; upon interaction with the DnaJ-bound protein, DnaK hydrolyzes its bound ATP, resulting in the formation of a stable complex. GrpE releases ADP from DnaK; ATP binding to DnaK triggers the release of the substrate protein, thus completing the reaction cycle. Several rounds of ATP-dependent interactions between DnaJ, DnaK and GrpE are required for fully efficient folding. Also involved, together with DnaK and GrpE, in the DNA replication of plasmids through activation of initiation proteins. This chain is Chaperone protein DnaJ, found in Klebsiella pneumoniae (strain 342).